The following is a 364-amino-acid chain: Ribosomal RNA large subunit methyltransferase F (364 aa).

The tract at residues 1-28 (MTNKRKSAKPLEPAKRTPKLRTKKSRDL) is disordered.

It belongs to the methyltransferase superfamily. METTL16/RlmF family.

Its subcellular location is the cytoplasm. The catalysed reaction is adenosine(1618) in 23S rRNA + S-adenosyl-L-methionine = N(6)-methyladenosine(1618) in 23S rRNA + S-adenosyl-L-homocysteine + H(+). Specifically methylates the adenine in position 1618 of 23S rRNA. The polypeptide is Ribosomal RNA large subunit methyltransferase F (Vibrio vulnificus (strain YJ016)).